The chain runs to 661 residues: 3-hydroxypropionyl-coenzyme A synthetase (661 aa).

Asp526 is an active-site residue. Lys617 bears the N6-acetyllysine mark.

Belongs to the ATP-dependent AMP-binding enzyme family. Homotetramer.

It catalyses the reaction 3-hydroxypropanoate + ATP + CoA = 3-hydroxypropanoyl-CoA + AMP + diphosphate. In terms of biological role, plays a role in the autotrophic CO(2) fixation pathway. Activates 3-hydroxypropionate to its CoA ester. Can also activate propionate, and to a lesser extent acrylate, acetate and butyrate. The polypeptide is 3-hydroxypropionyl-coenzyme A synthetase (Metallosphaera sedula (strain ATCC 51363 / DSM 5348 / JCM 9185 / NBRC 15509 / TH2)).